A 417-amino-acid chain; its full sequence is Serine hydroxymethyltransferase (417 aa).

(6S)-5,6,7,8-tetrahydrofolate-binding positions include L121 and 125-127; that span reads GHL. At K229 the chain carries N6-(pyridoxal phosphate)lysine. (6S)-5,6,7,8-tetrahydrofolate is bound at residue 354 to 356; the sequence is SPF.

Belongs to the SHMT family. Homodimer. It depends on pyridoxal 5'-phosphate as a cofactor.

It localises to the cytoplasm. The catalysed reaction is (6R)-5,10-methylene-5,6,7,8-tetrahydrofolate + glycine + H2O = (6S)-5,6,7,8-tetrahydrofolate + L-serine. The protein operates within one-carbon metabolism; tetrahydrofolate interconversion. Its pathway is amino-acid biosynthesis; glycine biosynthesis; glycine from L-serine: step 1/1. Catalyzes the reversible interconversion of serine and glycine with tetrahydrofolate (THF) serving as the one-carbon carrier. This reaction serves as the major source of one-carbon groups required for the biosynthesis of purines, thymidylate, methionine, and other important biomolecules. Also exhibits THF-independent aldolase activity toward beta-hydroxyamino acids, producing glycine and aldehydes, via a retro-aldol mechanism. The polypeptide is Serine hydroxymethyltransferase (Dichelobacter nodosus (strain VCS1703A)).